A 793-amino-acid polypeptide reads, in one-letter code: Meiosis-specific protein ASY3 (793 aa).

Disordered regions lie at residues 1–40 (MSDY…DKDD), 58–97 (LQAN…RKLG), 110–287 (LSGS…KAGA), and 305–586 (EGLR…KRNS). Over residues 7 to 19 (FGSNYHPSSQSRK) the composition is skewed to polar residues. Positions 60–70 (ANKKEKSDLAA) are enriched in basic and acidic residues. A compositionally biased stretch (polar residues) spans 72-86 (QRNSAQVTGHVTSPW). A compositionally biased stretch (low complexity) spans 110–122 (LSGSKGLNKGLNG). Residues 131–142 (SFQNCPISSPQH) are compositionally biased toward polar residues. Basic and acidic residues-rich tracts occupy residues 151–165 (RNDR…RMEE) and 177–187 (SQREKMDKPGK). Residues 209–219 (PANNEDVNSET) are compositionally biased toward polar residues. The span at 221-248 (EVEKTNFKLSQDKGSNDDPLIKPRHNSD) shows a compositional bias: basic and acidic residues. Over residues 322 to 341 (KKQRGRRKNTVVKCRKAHSR) the composition is skewed to basic residues. Composition is skewed to basic and acidic residues over residues 342 to 354 (KKDE…KEAS), 363 to 385 (ESTE…DLHP), 392 to 407 (QKPD…HPSP), and 424 to 441 (NGDK…KSVE). 2 stretches are compositionally biased toward low complexity: residues 455–470 (APIS…EASP) and 491–502 (GTKKTSQGTTGQ). Basic and acidic residues-rich tracts occupy residues 505–527 (DTEK…RESS) and 541–553 (SDER…REDS). Residues 682 to 745 (SNLAKTKRKH…KGSIKKQRTS (64 aa)) are a coiled coil.

In terms of assembly, interacts with ASY1.

Its subcellular location is the chromosome. The protein resides in the nucleus. Its function is as follows. Required for normal meiosis in male and female gametophytes. Acts with ASY1 at the interface between the developing chromosome axes and the recombination machinery to ensure interhomolog recombination. Required for synaptonemal complex formation during meiosis. This is Meiosis-specific protein ASY3 from Arabidopsis thaliana (Mouse-ear cress).